A 283-amino-acid chain; its full sequence is Pantothenate synthetase (283 aa).

Residue 30-37 (MGYFHEGH) participates in ATP binding. The Proton donor role is filled by His-37. Gln-61 contacts (R)-pantoate. Residue Gln-61 coordinates beta-alanine. 147–150 (GEKD) provides a ligand contact to ATP. (R)-pantoate is bound at residue Gln-153. ATP contacts are provided by residues Val-176 and 184 to 187 (MSSR).

It belongs to the pantothenate synthetase family. Homodimer.

It is found in the cytoplasm. The catalysed reaction is (R)-pantoate + beta-alanine + ATP = (R)-pantothenate + AMP + diphosphate + H(+). It functions in the pathway cofactor biosynthesis; (R)-pantothenate biosynthesis; (R)-pantothenate from (R)-pantoate and beta-alanine: step 1/1. In terms of biological role, catalyzes the condensation of pantoate with beta-alanine in an ATP-dependent reaction via a pantoyl-adenylate intermediate. The chain is Pantothenate synthetase from Syntrophobacter fumaroxidans (strain DSM 10017 / MPOB).